A 262-amino-acid chain; its full sequence is Cytochrome c oxidase subunit 3 (262 aa).

The next 7 helical transmembrane spans lie at 11–31, 32–52, 83–103, 125–147, 160–180, 198–218, and 240–260; these read LVEPSPWPLVGGSAAFTLTVG, LVMWFHYNSISLMILGLVMIV, GMVLFIVSEVFFFLAFFWAFF, LNAFAVPLLNTAVLLSSGVTVTW, AIQSLAITVMLGLYFTGLQAW, FFVATGFHGLHVIIGSTFLMV, and AWYWHFVDVVWLFLYVCIYWW.

This sequence belongs to the cytochrome c oxidase subunit 3 family. In terms of assembly, component of the cytochrome c oxidase (complex IV, CIV), a multisubunit enzyme composed of a catalytic core of 3 subunits and several supernumerary subunits. The complex exists as a monomer or a dimer and forms supercomplexes (SCs) in the inner mitochondrial membrane with ubiquinol-cytochrome c oxidoreductase (cytochrome b-c1 complex, complex III, CIII).

Its subcellular location is the mitochondrion inner membrane. It carries out the reaction 4 Fe(II)-[cytochrome c] + O2 + 8 H(+)(in) = 4 Fe(III)-[cytochrome c] + 2 H2O + 4 H(+)(out). Its function is as follows. Component of the cytochrome c oxidase, the last enzyme in the mitochondrial electron transport chain which drives oxidative phosphorylation. The respiratory chain contains 3 multisubunit complexes succinate dehydrogenase (complex II, CII), ubiquinol-cytochrome c oxidoreductase (cytochrome b-c1 complex, complex III, CIII) and cytochrome c oxidase (complex IV, CIV), that cooperate to transfer electrons derived from NADH and succinate to molecular oxygen, creating an electrochemical gradient over the inner membrane that drives transmembrane transport and the ATP synthase. Cytochrome c oxidase is the component of the respiratory chain that catalyzes the reduction of oxygen to water. Electrons originating from reduced cytochrome c in the intermembrane space (IMS) are transferred via the dinuclear copper A center (CU(A)) of subunit 2 and heme A of subunit 1 to the active site in subunit 1, a binuclear center (BNC) formed by heme A3 and copper B (CU(B)). The BNC reduces molecular oxygen to 2 water molecules using 4 electrons from cytochrome c in the IMS and 4 protons from the mitochondrial matrix. In Branchiostoma floridae (Florida lancelet), this protein is Cytochrome c oxidase subunit 3 (COIII).